Here is a 289-residue protein sequence, read N- to C-terminus: Pantothenate synthetase (289 aa).

28 to 35 lines the ATP pocket; that stretch reads MGCLHEGH. His35 acts as the Proton donor in catalysis. Gln59 is a binding site for (R)-pantoate. Gln59 contacts beta-alanine. 147–150 lines the ATP pocket; the sequence is GLKD. Gln153 lines the (R)-pantoate pocket. ATP is bound by residues Val176 and 184-187; that span reads MSSR.

It belongs to the pantothenate synthetase family. As to quaternary structure, homodimer.

Its subcellular location is the cytoplasm. It catalyses the reaction (R)-pantoate + beta-alanine + ATP = (R)-pantothenate + AMP + diphosphate + H(+). It participates in cofactor biosynthesis; (R)-pantothenate biosynthesis; (R)-pantothenate from (R)-pantoate and beta-alanine: step 1/1. Catalyzes the condensation of pantoate with beta-alanine in an ATP-dependent reaction via a pantoyl-adenylate intermediate. This chain is Pantothenate synthetase, found in Magnetococcus marinus (strain ATCC BAA-1437 / JCM 17883 / MC-1).